Reading from the N-terminus, the 398-residue chain is 1-deoxy-D-xylulose 5-phosphate reductoisomerase (398 aa).

The NADPH site is built by Thr-14, Gly-15, Ser-16, Ile-17, Gln-42, and Asn-128. Lys-129 contributes to the 1-deoxy-D-xylulose 5-phosphate binding site. Glu-130 is a binding site for NADPH. Asp-154 serves as a coordination point for Mn(2+). Positions 155, 156, 185, and 208 each coordinate 1-deoxy-D-xylulose 5-phosphate. Glu-156 contributes to the Mn(2+) binding site. Residue Gly-214 participates in NADPH binding. The 1-deoxy-D-xylulose 5-phosphate site is built by Ser-221, Asn-226, Lys-227, and Glu-230. Glu-230 lines the Mn(2+) pocket.

Belongs to the DXR family. Mg(2+) serves as cofactor. The cofactor is Mn(2+).

It carries out the reaction 2-C-methyl-D-erythritol 4-phosphate + NADP(+) = 1-deoxy-D-xylulose 5-phosphate + NADPH + H(+). The protein operates within isoprenoid biosynthesis; isopentenyl diphosphate biosynthesis via DXP pathway; isopentenyl diphosphate from 1-deoxy-D-xylulose 5-phosphate: step 1/6. Catalyzes the NADPH-dependent rearrangement and reduction of 1-deoxy-D-xylulose-5-phosphate (DXP) to 2-C-methyl-D-erythritol 4-phosphate (MEP). The protein is 1-deoxy-D-xylulose 5-phosphate reductoisomerase of Dechloromonas aromatica (strain RCB).